The following is a 272-amino-acid chain: 2-dehydro-3-deoxyphosphooctonate aldolase (272 aa).

It belongs to the KdsA family.

Its subcellular location is the cytoplasm. It carries out the reaction D-arabinose 5-phosphate + phosphoenolpyruvate + H2O = 3-deoxy-alpha-D-manno-2-octulosonate-8-phosphate + phosphate. It participates in carbohydrate biosynthesis; 3-deoxy-D-manno-octulosonate biosynthesis; 3-deoxy-D-manno-octulosonate from D-ribulose 5-phosphate: step 2/3. Its pathway is bacterial outer membrane biogenesis; lipopolysaccharide biosynthesis. The protein is 2-dehydro-3-deoxyphosphooctonate aldolase of Geobacter sulfurreducens (strain ATCC 51573 / DSM 12127 / PCA).